We begin with the raw amino-acid sequence, 351 residues long: tRNA-splicing endonuclease (351 aa).

Residues Y287, H298, and K329 contribute to the active site.

This sequence belongs to the tRNA-intron endonuclease family. Archaeal long subfamily. Homodimer.

It carries out the reaction pretRNA = a 3'-half-tRNA molecule with a 5'-OH end + a 5'-half-tRNA molecule with a 2',3'-cyclic phosphate end + an intron with a 2',3'-cyclic phosphate and a 5'-hydroxyl terminus.. In terms of biological role, endonuclease that removes tRNA introns. Cleaves pre-tRNA at the 5'- and 3'-splice sites to release the intron. The products are an intron and two tRNA half-molecules bearing 2',3' cyclic phosphate and 5'-OH termini. Recognizes a pseudosymmetric substrate in which 2 bulged loops of 3 bases are separated by a stem of 4 bp. This Methanococcoides burtonii (strain DSM 6242 / NBRC 107633 / OCM 468 / ACE-M) protein is tRNA-splicing endonuclease.